The following is a 506-amino-acid chain: Spindle pole body protein CSA6 (506 aa).

4 disordered regions span residues 18-121 (SPIK…PNEN), 252-276 (EKHN…VETQ), 329-429 (PSSP…YSIR), and 447-470 (KNDQ…EEKV). Positions 38–48 (IDLRDYMDRQK) are enriched in basic and acidic residues. Residues 50–59 (SRNYSDSEYT) show a composition bias toward polar residues. Residues 63 to 72 (IKREKPETKQ) are compositionally biased toward basic and acidic residues. Polar residues predominate over residues 94-119 (PTKNYSQHVMQERSAPNSPQKKSLPN). Polar residues-rich tracts occupy residues 330–353 (SSPN…SVNL) and 361–389 (QPSH…NPSP). Basic and acidic residues-rich tracts occupy residues 412-422 (EWTREREERDG) and 461-470 (TDGKEEEEKV).

The protein localises to the cytoplasm. It is found in the cytoskeleton. It localises to the microtubule organizing center. The protein resides in the spindle pole body. Functionally, plays a role in mitotic spindle pole body organization, possibly at the point of spindle pole body separation. Required for mitotic exit. This is Spindle pole body protein CSA6 from Candida tropicalis (strain ATCC MYA-3404 / T1) (Yeast).